Here is a 236-residue protein sequence, read N- to C-terminus: Small ribosomal subunit protein uS2c (236 aa).

It belongs to the universal ribosomal protein uS2 family.

It localises to the plastid. The protein resides in the chloroplast. The polypeptide is Small ribosomal subunit protein uS2c (rps2) (Oenothera parviflora (Small-flowered evening primrose)).